Reading from the N-terminus, the 216-residue chain is GTP-binding nuclear protein Ran, testis-specific isoform (216 aa).

Residue alanine 2 is modified to N-acetylalanine. The Small GTPase Ran-type domain maps to 7–171 (PQIQFKLVLV…FWLARKLIGD (165 aa)). 17-24 (GDGGTGKT) lines the GTP pocket. Threonine 24 bears the Phosphothreonine mark. A switch-I region spans residues 37–45 (KEYVATLGV). Lysine 60 is modified (N6-acetyllysine). A GTP-binding site is contributed by 65–69 (DTAGQ). Residues 68–84 (GQEKFGGLRDGYYIQAQ) form a switch-II region. Lysine 71 carries the post-translational modification N6-acetyllysine; alternate. Lysine 71 participates in a covalent cross-link: Glycyl lysine isopeptide (Lys-Gly) (interchain with G-Cter in SUMO2); alternate. A Glycyl lysine isopeptide (Lys-Gly) (interchain with G-Cter in ubiquitin); alternate cross-link involves residue lysine 71. Lysine 99 is modified (N6-acetyllysine). 122–125 (NKVD) lines the GTP pocket. Position 134 is an N6-acetyllysine (lysine 134). Residue lysine 152 forms a Glycyl lysine isopeptide (Lys-Gly) (interchain with G-Cter in SUMO2) linkage. Residue lysine 159 is modified to N6-acetyllysine; alternate. The residue at position 159 (lysine 159) is an N6-succinyllysine; alternate.

It belongs to the small GTPase superfamily. Ran family. In terms of tissue distribution, testis specific.

It is found in the nucleus. It catalyses the reaction GTP + H2O = GDP + phosphate + H(+). Its function is as follows. GTP-binding protein involved in nucleocytoplasmic transport. Required for the import of protein into the nucleus and also for RNA export. Involved in chromatin condensation and control of cell cycle. This chain is GTP-binding nuclear protein Ran, testis-specific isoform (Rasl2-9), found in Rattus norvegicus (Rat).